Consider the following 877-residue polypeptide: ABC transporter A family member 1 (877 aa).

7 consecutive transmembrane segments (helical) span residues 46-66, 268-288, 324-344, 347-367, 379-399, 420-440, and 479-499; these read YFST…LFLI, VWGG…LLYK, ILIS…FFLG, FFVL…VAFF, IGIG…FSGM, IILF…IGNV, and LLAL…IIPG. Residues 552 to 788 form the ABC transporter domain; the sequence is LIICGLSKSY…YGEGYSVNIV (237 aa). 591 to 598 is an ATP binding site; sequence GSNGCGKS.

It belongs to the ABC transporter superfamily. ABCA family.

It is found in the membrane. The polypeptide is ABC transporter A family member 1 (abcA1) (Dictyostelium discoideum (Social amoeba)).